The chain runs to 491 residues: Nicotinamide phosphoribosyltransferase (491 aa).

An N-acetylmethionine modification is found at M1. Y188 carries the phosphotyrosine modification. R196 serves as a coordination point for diphosphate. Position 219 (D219) interacts with beta-nicotinamide D-ribonucleotide. The diphosphate site is built by H247 and R311. Residues 311–313 (RPD), 353–354 (GD), G384, and R392 contribute to the beta-nicotinamide D-ribonucleotide site. Phosphoserine is present on S472.

Belongs to the NAPRTase family. Homodimer. In terms of tissue distribution, expressed in various tissues. At the highest level in liver and at the second highest in heart. The amount is higher in heart than in lung.

The protein resides in the nucleus. It localises to the cytoplasm. It is found in the secreted. It catalyses the reaction beta-nicotinamide D-ribonucleotide + diphosphate = 5-phospho-alpha-D-ribose 1-diphosphate + nicotinamide + H(+). It functions in the pathway cofactor biosynthesis; NAD(+) biosynthesis; nicotinamide D-ribonucleotide from 5-phospho-alpha-D-ribose 1-diphosphate and nicotinamide: step 1/1. Catalyzes the condensation of nicotinamide with 5-phosphoribosyl-1-pyrophosphate to yield nicotinamide mononucleotide, an intermediate in the biosynthesis of NAD. It is the rate limiting component in the mammalian NAD biosynthesis pathway. The secreted form behaves both as a cytokine with immunomodulating properties and an adipokine with anti-diabetic properties, it has no enzymatic activity, partly because of lack of activation by ATP, which has a low level in extracellular space and plasma. Plays a role in the modulation of circadian clock function. NAMPT-dependent oscillatory production of NAD regulates oscillation of clock target gene expression by releasing the core clock component: CLOCK-BMAL1 heterodimer from NAD-dependent SIRT1-mediated suppression. The polypeptide is Nicotinamide phosphoribosyltransferase (Nampt) (Rattus norvegicus (Rat)).